Consider the following 101-residue polypeptide: MAAPLSVEVEFGGGAELLFDGVKKHQVTLPGQEEPWDIRSLLVWIKKNLLKERPELFIQGDSVRPGILVLVNDADWELLGELDYQLQDQDSVLFISTLHGG.

The residue at position 101 (G101) is a 1-thioglycine. A Glycyl lysine isopeptide (Gly-Lys) (interchain with K-? in acceptor proteins) cross-link involves residue G101.

It belongs to the URM1 family. As to quaternary structure, component of a complex at least composed of URM1, CTU2/NCS2 and CTU1/ATPBD3. C-terminal thiocarboxylation occurs in 2 steps, it is first acyl-adenylated (-COAMP) via the hesA/moeB/thiF part of MOCS3, then thiocarboxylated (-COSH) via the rhodanese domain of MOCS3.

It is found in the cytoplasm. It participates in tRNA modification; 5-methoxycarbonylmethyl-2-thiouridine-tRNA biosynthesis. Its function is as follows. Acts as a sulfur carrier required for 2-thiolation of mcm(5)S(2)U at tRNA wobble positions of cytosolic tRNA(Lys), tRNA(Glu) and tRNA(Gln). Serves as sulfur donor in tRNA 2-thiolation reaction by being thiocarboxylated (-COSH) at its C-terminus by MOCS3. The sulfur is then transferred to tRNA to form 2-thiolation of mcm(5)S(2)U. Also acts as a ubiquitin-like protein (UBL) that is covalently conjugated via an isopeptide bond to lysine residues of target proteins such as MOCS3, ATPBD3, CTU2, USP15 and CAS. The thiocarboxylated form serves as substrate for conjugation and oxidative stress specifically induces the formation of UBL-protein conjugates. The chain is Ubiquitin-related modifier 1 from Bos taurus (Bovine).